The primary structure comprises 346 residues: S-adenosylmethionine:tRNA ribosyltransferase-isomerase (346 aa).

Belongs to the QueA family. As to quaternary structure, monomer.

Its subcellular location is the cytoplasm. It carries out the reaction 7-aminomethyl-7-carbaguanosine(34) in tRNA + S-adenosyl-L-methionine = epoxyqueuosine(34) in tRNA + adenine + L-methionine + 2 H(+). Its pathway is tRNA modification; tRNA-queuosine biosynthesis. Its function is as follows. Transfers and isomerizes the ribose moiety from AdoMet to the 7-aminomethyl group of 7-deazaguanine (preQ1-tRNA) to give epoxyqueuosine (oQ-tRNA). This chain is S-adenosylmethionine:tRNA ribosyltransferase-isomerase, found in Neisseria meningitidis serogroup C (strain 053442).